Consider the following 517-residue polypeptide: Acyltransferase AFT15-1 (517 aa).

Catalysis depends on His-180, which acts as the Proton acceptor.

This sequence belongs to the plant acyltransferase family.

It participates in mycotoxin biosynthesis. Functionally, acyltransferase; part of the gene clusters that mediate the biosynthesis of the host-selective toxins (HSTs) AF-toxins responsible for Alternaria black spot of strawberry disease by the strawberry pathotype. AF-toxin I and III are valine derivatives of 2,3-dyhydroxy-isovaleric acid and 2-hydroxy-isovaleric acid respectively, while AF II is an isoleucine derivative of 2-hydroxy-valeric acid. These derivatives are bound to a 9,10-epoxy-8-hydroxy-9-methyl-decatrienoic acid (EDA) moiety. On cellular level, AF-toxins affect plasma membrane of susceptible cells and cause a sudden increase in loss of K(+) after a few minutes of toxin treatment. The aldo-keto reductase AFTS1 catalyzes the conversion of 2-keto-isovaleric acid (2-KIV) to 2-hydroxy-isovaleric acid (2-HIV) by reduction of its ketone to an alcohol. The acyl-CoA ligase AFT1, the hydrolase AFT2 and the enoyl-CoA hydratases AFT3 and AFT6, but also the polyketide synthase AFT9, the acyl-CoA dehydrogenase AFT10, the cytochrome P450 monooxygenase AFT11 and the oxidoreductase AFT12 are all involved in the biosynthesis of the AK-, AF- and ACT-toxin common EDA structural moiety. The exact function of each enzyme, and of additional enzymes identified within the AF-toxin clusters have still to be determined. The sequence is that of Acyltransferase AFT15-1 (AFT15-1) from Alternaria alternata (Alternaria rot fungus).